Here is a 435-residue protein sequence, read N- to C-terminus: Adenylosuccinate synthetase (435 aa).

GTP contacts are provided by residues 11-17 (GDEGKGK) and 39-41 (GHT). Residue Asp-12 is the Proton acceptor of the active site. Mg(2+) contacts are provided by Asp-12 and Gly-39. Residues 12-15 (DEGK), 37-40 (NAGH), Thr-128, Arg-142, Gln-223, Thr-238, and Arg-302 contribute to the IMP site. His-40 serves as the catalytic Proton donor. A substrate-binding site is contributed by 298 to 304 (SVTGRPR). GTP is bound by residues Arg-304, 330-332 (KLD), and 412-414 (STG).

Belongs to the adenylosuccinate synthetase family. As to quaternary structure, homodimer. Requires Mg(2+) as cofactor.

It localises to the cytoplasm. It carries out the reaction IMP + L-aspartate + GTP = N(6)-(1,2-dicarboxyethyl)-AMP + GDP + phosphate + 2 H(+). It functions in the pathway purine metabolism; AMP biosynthesis via de novo pathway; AMP from IMP: step 1/2. Functionally, plays an important role in the de novo pathway of purine nucleotide biosynthesis. Catalyzes the first committed step in the biosynthesis of AMP from IMP. The polypeptide is Adenylosuccinate synthetase (Coxiella burnetii (strain RSA 331 / Henzerling II)).